A 318-amino-acid chain; its full sequence is NADH-ubiquinone oxidoreductase chain 1 (318 aa).

A run of 8 helical transmembrane segments spans residues 2–22 (FTINILLLVIPILLAVAFLTL), 70–90 (MFIIAPILALTLALTMWIPLP), 100–120 (LGVLFMLAMSSLAVYSILWSG), 146–166 (LAIILLSVLLMNGSFTLSTLI), 171–191 (HLWLIFPSWPLAMMWFISTLA), 222–242 (LFFMAEYANIIMMNAFTTILF), 254–276 (LYTINFTTKTLLLTTSFLWIRAS), and 294–314 (LPLTLALCMWHVSLPITTSSI).

The protein belongs to the complex I subunit 1 family. In terms of assembly, core subunit of respiratory chain NADH dehydrogenase (Complex I) which is composed of 45 different subunits.

The protein localises to the mitochondrion inner membrane. It catalyses the reaction a ubiquinone + NADH + 5 H(+)(in) = a ubiquinol + NAD(+) + 4 H(+)(out). Functionally, core subunit of the mitochondrial membrane respiratory chain NADH dehydrogenase (Complex I) which catalyzes electron transfer from NADH through the respiratory chain, using ubiquinone as an electron acceptor. Essential for the catalytic activity and assembly of complex I. In Ceratotherium simum (White rhinoceros), this protein is NADH-ubiquinone oxidoreductase chain 1 (MT-ND1).